A 185-amino-acid chain; its full sequence is Ribosome-recycling factor (185 aa).

It belongs to the RRF family.

The protein localises to the cytoplasm. In terms of biological role, responsible for the release of ribosomes from messenger RNA at the termination of protein biosynthesis. May increase the efficiency of translation by recycling ribosomes from one round of translation to another. This chain is Ribosome-recycling factor, found in Pseudomonas syringae pv. tomato (strain ATCC BAA-871 / DC3000).